The chain runs to 399 residues: Succinate--CoA ligase [ADP-forming] subunit beta (399 aa).

In terms of domain architecture, ATP-grasp spans 9–254 (KAVLKSFGAP…TTEEDEKEIE (246 aa)). Residues Lys46, 53–55 (GRG), Glu109, Ala112, and Glu117 contribute to the ATP site. Mg(2+) is bound by residues Asn209 and Asp223. Substrate is bound by residues Asn274 and 331-333 (GIM).

It belongs to the succinate/malate CoA ligase beta subunit family. Heterotetramer of two alpha and two beta subunits. Mg(2+) is required as a cofactor.

It catalyses the reaction succinate + ATP + CoA = succinyl-CoA + ADP + phosphate. It carries out the reaction GTP + succinate + CoA = succinyl-CoA + GDP + phosphate. It functions in the pathway carbohydrate metabolism; tricarboxylic acid cycle; succinate from succinyl-CoA (ligase route): step 1/1. Its function is as follows. Succinyl-CoA synthetase functions in the citric acid cycle (TCA), coupling the hydrolysis of succinyl-CoA to the synthesis of either ATP or GTP and thus represents the only step of substrate-level phosphorylation in the TCA. The beta subunit provides nucleotide specificity of the enzyme and binds the substrate succinate, while the binding sites for coenzyme A and phosphate are found in the alpha subunit. This chain is Succinate--CoA ligase [ADP-forming] subunit beta, found in Maricaulis maris (strain MCS10) (Caulobacter maris).